A 265-amino-acid chain; its full sequence is tRNA pseudouridine synthase A (265 aa).

The Nucleophile role is filled by aspartate 58. Tyrosine 116 contributes to the substrate binding site.

Belongs to the tRNA pseudouridine synthase TruA family. As to quaternary structure, homodimer.

The enzyme catalyses uridine(38/39/40) in tRNA = pseudouridine(38/39/40) in tRNA. Functionally, formation of pseudouridine at positions 38, 39 and 40 in the anticodon stem and loop of transfer RNAs. In Neisseria gonorrhoeae (strain NCCP11945), this protein is tRNA pseudouridine synthase A.